A 295-amino-acid polypeptide reads, in one-letter code: Protoheme IX farnesyltransferase (295 aa).

The Cytoplasmic portion of the chain corresponds to 1–9 (MSVKHFIQI). The helical transmembrane segment at 10 to 28 (TKPGIIFGNVLSVAGGFFL) threads the bilayer. Topologically, residues 29 to 37 (ASKGHVDFA) are periplasmic. Residues 38 to 56 (LFLAVVIGTSLVVASGCVF) traverse the membrane as a helical segment. Residues 57–78 (NNCIDRDIDHKMERTKNRVMVQ) are Cytoplasmic-facing. The helical transmembrane segment at 79–97 (GGMSLPLALIYATLLGVAG) threads the bilayer. Residues 98–107 (FSLLYVQANP) lie on the Periplasmic side of the membrane. Residues 108–126 (LSAFCALIGFIVYVGFYSL) form a helical membrane-spanning segment. The Cytoplasmic segment spans residues 127-197 (WLKRKSVHGT…YSAANIPVLP (71 aa)). A helical membrane pass occupies residues 198–216 (VARGILAAKKQIVLYVLAF). At 217–228 (VLATLMLTLGGY) the chain is on the periplasmic side. A helical transmembrane segment spans residues 229–247 (AGLGYLAVAAAMGLYWLYM). The Cytoplasmic portion of the chain corresponds to 248 to 268 (AWGGYKAEDDSKWARKVFGFS). The chain crosses the membrane as a helical span at residues 269-287 (ILTVTALSVMMGVDSQTAA). At 288-295 (DVLMTYAR) the chain is on the periplasmic side.

It belongs to the UbiA prenyltransferase family. It depends on Mg(2+) as a cofactor. Ca(2+) is required as a cofactor.

It localises to the cell inner membrane. It carries out the reaction heme b + (2E,6E)-farnesyl diphosphate + H2O = Fe(II)-heme o + diphosphate. Its function is as follows. Converts protoheme IX and farnesyl diphosphate to heme O. This chain is Protoheme IX farnesyltransferase (cyoE), found in Pseudomonas putida (Arthrobacter siderocapsulatus).